The following is a 227-amino-acid chain: 6,7-dimethyl-8-ribityllumazine synthase, chloroplastic (227 aa).

Residues 1–71 (MKSLASPPCL…LRSSFVQTAA (71 aa)) constitute a chloroplast transit peptide. 5-amino-6-(D-ribitylamino)uracil-binding positions include Phe-94, 128–130 (SFE), and 152–154 (AVI). 157 to 158 (DT) contacts (2S)-2-hydroxy-3-oxobutyl phosphate. His-160 (proton donor) is an active-site residue. 5-amino-6-(D-ribitylamino)uracil is bound at residue Phe-185. Arg-199 serves as a coordination point for (2S)-2-hydroxy-3-oxobutyl phosphate.

It belongs to the DMRL synthase family. Oligomer forming an icosahedral capsid.

The protein localises to the plastid. Its subcellular location is the chloroplast. It carries out the reaction (2S)-2-hydroxy-3-oxobutyl phosphate + 5-amino-6-(D-ribitylamino)uracil = 6,7-dimethyl-8-(1-D-ribityl)lumazine + phosphate + 2 H2O + H(+). Its pathway is cofactor biosynthesis; riboflavin biosynthesis; riboflavin from 2-hydroxy-3-oxobutyl phosphate and 5-amino-6-(D-ribitylamino)uracil: step 1/2. Catalyzes the formation of 6,7-dimethyl-8-ribityllumazine by condensation of 5-amino-6-(D-ribitylamino)uracil with 3,4-dihydroxy-2-butanone 4-phosphate. This is the penultimate step in the biosynthesis of riboflavin. The polypeptide is 6,7-dimethyl-8-ribityllumazine synthase, chloroplastic (Arabidopsis thaliana (Mouse-ear cress)).